Consider the following 957-residue polypeptide: Translation initiation factor IF-2 (957 aa).

Disordered stretches follow at residues 34–282 (KSHS…RVVK) and 311–367 (SQSL…TIAG). Pro residues predominate over residues 107–161 (PARPQPPQAPTRPTPPAPVAPKPVEPVAAKPPAPPAKPEPTPPRPVPTLVPPPTR). Over residues 163-188 (TKKEEKVAATPPPRKELKEPPKKEKG) the composition is skewed to basic and acidic residues. The segment covering 209 to 242 (PPAPAKPPEMAPKPALPELQPPPKPVRAPNPPKP) has biased composition (pro residues). Basic and acidic residues-rich tracts occupy residues 250–259 (LDDKSVSKVI) and 266–275 (KDFDEEESKR). The region spanning 444-617 (RRPPVVTIMG…LLVAEVEDLY (174 aa)) is the tr-type G domain. The G1 stretch occupies residues 453–460 (GHVDHGKT). Residue 453 to 460 (GHVDHGKT) participates in GTP binding. The tract at residues 478 to 482 (GITQH) is G2. The G3 stretch occupies residues 503–506 (DTPG). Residues 503–507 (DTPGH) and 557–560 (NKID) contribute to the GTP site. Positions 557–560 (NKID) are G4. The tract at residues 593–595 (SAL) is G5.

The protein belongs to the TRAFAC class translation factor GTPase superfamily. Classic translation factor GTPase family. IF-2 subfamily.

Its subcellular location is the cytoplasm. In terms of biological role, one of the essential components for the initiation of protein synthesis. Protects formylmethionyl-tRNA from spontaneous hydrolysis and promotes its binding to the 30S ribosomal subunits. Also involved in the hydrolysis of GTP during the formation of the 70S ribosomal complex. This Thermosynechococcus vestitus (strain NIES-2133 / IAM M-273 / BP-1) protein is Translation initiation factor IF-2.